The primary structure comprises 327 residues: Ribose-phosphate pyrophosphokinase (327 aa).

Residues 40 to 42 (DGE) and 99 to 100 (RQ) contribute to the ATP site. Residues His-134 and Asp-173 each contribute to the Mg(2+) site. Residue Lys-196 is part of the active site. D-ribose 5-phosphate is bound by residues Arg-198, Asp-222, and 226–230 (DTANT).

It belongs to the ribose-phosphate pyrophosphokinase family. Class I subfamily. Homohexamer. The cofactor is Mg(2+).

It localises to the cytoplasm. It carries out the reaction D-ribose 5-phosphate + ATP = 5-phospho-alpha-D-ribose 1-diphosphate + AMP + H(+). It functions in the pathway metabolic intermediate biosynthesis; 5-phospho-alpha-D-ribose 1-diphosphate biosynthesis; 5-phospho-alpha-D-ribose 1-diphosphate from D-ribose 5-phosphate (route I): step 1/1. In terms of biological role, involved in the biosynthesis of the central metabolite phospho-alpha-D-ribosyl-1-pyrophosphate (PRPP) via the transfer of pyrophosphoryl group from ATP to 1-hydroxyl of ribose-5-phosphate (Rib-5-P). In Chromobacterium violaceum (strain ATCC 12472 / DSM 30191 / JCM 1249 / CCUG 213 / NBRC 12614 / NCIMB 9131 / NCTC 9757 / MK), this protein is Ribose-phosphate pyrophosphokinase.